A 514-amino-acid polypeptide reads, in one-letter code: Putative thymidine phosphorylase (514 aa).

It belongs to the thymidine/pyrimidine-nucleoside phosphorylase family. Type 2 subfamily.

It catalyses the reaction thymidine + phosphate = 2-deoxy-alpha-D-ribose 1-phosphate + thymine. This chain is Putative thymidine phosphorylase, found in Sphingopyxis alaskensis (strain DSM 13593 / LMG 18877 / RB2256) (Sphingomonas alaskensis).